We begin with the raw amino-acid sequence, 267 residues long: Cilia- and flagella-associated protein 300 (267 aa).

Belongs to the CFAP300 family. In terms of assembly, interacts with DNAAF2.

The protein resides in the cytoplasm. It localises to the cytoskeleton. The protein localises to the cilium axoneme. Its function is as follows. Cilium- and flagellum-specific protein that plays a role in axonemal structure organization and motility. May play a role in outer and inner dynein arm assembly. This is Cilia- and flagella-associated protein 300 from Bos taurus (Bovine).